The following is a 156-amino-acid chain: SsrA-binding protein (156 aa).

Positions 135–150 are enriched in basic and acidic residues; sequence KRDTIKDREWQRDRSR. A disordered region spans residues 135-156; the sequence is KRDTIKDREWQRDRSRIMKKNT.

This sequence belongs to the SmpB family.

The protein localises to the cytoplasm. Required for rescue of stalled ribosomes mediated by trans-translation. Binds to transfer-messenger RNA (tmRNA), required for stable association of tmRNA with ribosomes. tmRNA and SmpB together mimic tRNA shape, replacing the anticodon stem-loop with SmpB. tmRNA is encoded by the ssrA gene; the 2 termini fold to resemble tRNA(Ala) and it encodes a 'tag peptide', a short internal open reading frame. During trans-translation Ala-aminoacylated tmRNA acts like a tRNA, entering the A-site of stalled ribosomes, displacing the stalled mRNA. The ribosome then switches to translate the ORF on the tmRNA; the nascent peptide is terminated with the 'tag peptide' encoded by the tmRNA and targeted for degradation. The ribosome is freed to recommence translation, which seems to be the essential function of trans-translation. This is SsrA-binding protein from Legionella pneumophila (strain Paris).